The primary structure comprises 292 residues: Acetylglutamate kinase (292 aa).

Substrate is bound by residues 62 to 63 (GG), Arg-84, and Asn-188.

It belongs to the acetylglutamate kinase family. ArgB subfamily.

It is found in the cytoplasm. It catalyses the reaction N-acetyl-L-glutamate + ATP = N-acetyl-L-glutamyl 5-phosphate + ADP. It functions in the pathway amino-acid biosynthesis; L-arginine biosynthesis; N(2)-acetyl-L-ornithine from L-glutamate: step 2/4. In terms of biological role, catalyzes the ATP-dependent phosphorylation of N-acetyl-L-glutamate. This Methanosarcina mazei (strain ATCC BAA-159 / DSM 3647 / Goe1 / Go1 / JCM 11833 / OCM 88) (Methanosarcina frisia) protein is Acetylglutamate kinase.